A 487-amino-acid polypeptide reads, in one-letter code: DNA-dependent metalloprotease SPRTN (487 aa).

The residue at position 1 (M1) is an N-acetylmethionine. The region spanning 45–212 is the SprT-like domain; that stretch reads LQGLFVLFND…KTCGGTYIKI (168 aa). Residue H111 coordinates Zn(2+). The active site involves E112. Positions 115 and 130 each coordinate Zn(2+). A disordered region spans residues 219 to 248; sequence SKKGKGKTKLRKQPVSEAENKDKPNRGEKQ. Residues 220–230 are compositionally biased toward basic residues; sequence KKGKGKTKLRK. K230 carries the N6-acetyllysine modification. Over residues 236 to 247 the composition is skewed to basic and acidic residues; the sequence is AENKDKPNRGEK. The SHP-box motif lies at 253–261; the sequence is FTGKGYVLG. S267 carries the phosphoserine modification. Positions 280–289 are enriched in polar residues; that stretch reads SQEPLSQDHS. The tract at residues 280–317 is disordered; sequence SQEPLSQDHSANALRPHSKTEVKFEQNGPSKKTSVASP. A Glycyl lysine isopeptide (Lys-Gly) (interchain with G-Cter in SUMO2) cross-link involves residue K302. Residues 306-317 show a composition bias toward polar residues; it reads NGPSKKTSVASP. The short motif at 324 to 331 is the PIP-box element; the sequence is QNVLSNYF. K340 participates in a covalent cross-link: Glycyl lysine isopeptide (Lys-Gly) (interchain with G-Cter in SUMO2); alternate. K340 is covalently cross-linked (Glycyl lysine isopeptide (Lys-Gly) (interchain with G-Cter in ubiquitin); alternate). Residues 347–379 form a disordered region; the sequence is GSPVKSLTVGDSTTKSVSAGSQRRVTSSRTSLR. S373 bears the Phosphoserine mark. The Nuclear localization signal motif lies at 401–412; that stretch reads GKLPSKRPRIED. A Glycyl lysine isopeptide (Lys-Gly) (interchain with G-Cter in ubiquitin) cross-link involves residue K413. Residues K422 and K423 each participate in a glycyl lysine isopeptide (Lys-Gly) (interchain with G-Cter in SUMO2) cross-link. Positions 427–455 are disordered; it reads QSGGGDVTSSSHPPAAAQSPSGASGQSRV. Positions 435–453 are enriched in low complexity; it reads SSSHPPAAAQSPSGASGQS. The UBZ4-type zinc-finger motif lies at 455 to 482; the sequence is VVHCPVCQDEVSETQINEHLDWCLERDS. C458, C461, H473, and C477 together coordinate Zn(2+). K486 participates in a covalent cross-link: Glycyl lysine isopeptide (Lys-Gly) (interchain with G-Cter in SUMO2).

The protein belongs to the Spartan family. As to quaternary structure, homodimer. Interacts (VIA PIP-box) with PCNA (when ubiquitinated). Interacts (via its SHP-box) with VCP/p97. Interacts with RAD18. Interacts with KCTD13 and POLD3. The cofactor is Zn(2+). In terms of processing, autocatalytically cleaved in response to double-stranded DNA-binding: autocatalytic cleavage takes place in trans and leads to inactivation. Post-translationally, monoubiquitinated; monoubiquitination promotes exclusion from chromatin. Deubiquitinated by VCPIP1: deubiquitination is required for subsequent acetylation and recruitment to chromatin and DNA damage sites. Acetylated following deubiquitination by VCPIP1, leading to recruitment to chromatin and DNA damage sites. In terms of processing, phosphorylation by CHEK1 promotes recruitment to chromatin.

The protein resides in the nucleus. Its subcellular location is the chromosome. Its activity is regulated as follows. DNA-binding activates the protease activity: single-stranded DNA-binding specifically activates ability to cleave covalent DNA-protein cross-links (DPCs). In contrast, double-stranded DNA-binding specifically activates autocatalytic cleavage, and subsequent inactivation. In terms of biological role, DNA-dependent metalloendopeptidase that mediates the proteolytic cleavage of covalent DNA-protein cross-links (DPCs) during DNA synthesis, thereby playing a key role in maintaining genomic integrity. DPCs are highly toxic DNA lesions that interfere with essential chromatin transactions, such as replication and transcription, and which are induced by reactive agents, such as UV light or formaldehyde. Associates with the DNA replication machinery and specifically removes DPCs during DNA synthesis. Catalyzes proteolytic cleavage of the HMCES DNA-protein cross-link following unfolding by the BRIP1/FANCJ helicase. Acts as a pleiotropic protease for DNA-binding proteins cross-linked with DNA, such as TOP1, TOP2A, histones H3 and H4. Mediates degradation of DPCs that are not ubiquitinated, while it is not able to degrade ubiquitinated DPCs. SPRTN activation requires polymerase collision with DPCs followed by helicase bypass of DPCs. Involved in recruitment of VCP/p97 to sites of DNA damage. Also acts as an activator of CHEK1 during normal DNA replication by mediating proteolytic cleavage of CHEK1, thereby promoting CHEK1 removal from chromatin and subsequent activation. Does not activate CHEK1 in response to DNA damage. May also act as a 'reader' of ubiquitinated PCNA: recruited to sites of UV damage and interacts with ubiquitinated PCNA and RAD18, the E3 ubiquitin ligase that monoubiquitinates PCNA. Facilitates chromatin association of RAD18 and is required for efficient PCNA monoubiquitination, promoting a feed-forward loop to enhance PCNA ubiquitination and translesion DNA synthesis. This is DNA-dependent metalloprotease SPRTN from Bos taurus (Bovine).